We begin with the raw amino-acid sequence, 249 residues long: Coproheme decarboxylase (249 aa).

Residues R131, 145–149, H172, and Q185 contribute to the Fe-coproporphyrin III site; that span reads YPMNK. The active site involves Y145.

It belongs to the ChdC family. Type 1 subfamily. It depends on Fe-coproporphyrin III as a cofactor.

It carries out the reaction Fe-coproporphyrin III + 2 H2O2 + 2 H(+) = heme b + 2 CO2 + 4 H2O. It catalyses the reaction Fe-coproporphyrin III + H2O2 + H(+) = harderoheme III + CO2 + 2 H2O. The catalysed reaction is harderoheme III + H2O2 + H(+) = heme b + CO2 + 2 H2O. It functions in the pathway porphyrin-containing compound metabolism; protoheme biosynthesis. Involved in coproporphyrin-dependent heme b biosynthesis. Catalyzes the decarboxylation of Fe-coproporphyrin III (coproheme) to heme b (protoheme IX), the last step of the pathway. The reaction occurs in a stepwise manner with a three-propionate intermediate. The protein is Coproheme decarboxylase of Staphylococcus carnosus (strain TM300).